A 98-amino-acid chain; its full sequence is uncharacterized protein (98 aa).

Belongs to the CFAP97 family. As to expression, expressed in a number of tissues including brain, thymus, lung, heart, liver, spleen, kidney and testis.

This is an uncharacterized protein from Mus musculus (Mouse).